The chain runs to 829 residues: Cadherin-3 (829 aa).

The signal sequence occupies residues 1-24; that stretch reads MGLPRGPLASLLLLQVCWLQCAAS. The propeptide occupies 25 to 107; the sequence is EPCRAVFREA…SKRILRRHKR (83 aa). 5 Cadherin domains span residues 108 to 215, 216 to 328, 329 to 440, 441 to 546, and 547 to 650; these read DWVV…KPKF, TQDT…APMF, DPQK…APVF, VPPS…DHGP, and VPEP…CPGP. Over 108-654 the chain is Extracellular; it reads DWVVAPISVP…ETCPGPWKGG (547 aa). N-linked (GlcNAc...) asparagine glycosylation is present at N200. Residue N566 is glycosylated (N-linked (GlcNAc...) asparagine). Residues 655–677 form a helical membrane-spanning segment; sequence FILPVLGAVLALLFLLLVLLLLV. The Cytoplasmic portion of the chain corresponds to 678-829; the sequence is RKKRKIKEPL…ADMYGGGEDD (152 aa).

Interacts with CDCP1 and CTNNB1. As to expression, expressed in some normal epithelial tissues and in some carcinoma cell lines.

Its subcellular location is the cell membrane. Its function is as follows. Cadherins are calcium-dependent cell adhesion proteins. They preferentially interact with themselves in a homophilic manner in connecting cells; cadherins may thus contribute to the sorting of heterogeneous cell types. The sequence is that of Cadherin-3 (CDH3) from Homo sapiens (Human).